A 239-amino-acid chain; its full sequence is 2-C-methyl-D-erythritol 4-phosphate cytidylyltransferase (239 aa).

The protein belongs to the IspD/TarI cytidylyltransferase family. IspD subfamily.

It catalyses the reaction 2-C-methyl-D-erythritol 4-phosphate + CTP + H(+) = 4-CDP-2-C-methyl-D-erythritol + diphosphate. It functions in the pathway isoprenoid biosynthesis; isopentenyl diphosphate biosynthesis via DXP pathway; isopentenyl diphosphate from 1-deoxy-D-xylulose 5-phosphate: step 2/6. Catalyzes the formation of 4-diphosphocytidyl-2-C-methyl-D-erythritol from CTP and 2-C-methyl-D-erythritol 4-phosphate (MEP). This Acidobacterium capsulatum (strain ATCC 51196 / DSM 11244 / BCRC 80197 / JCM 7670 / NBRC 15755 / NCIMB 13165 / 161) protein is 2-C-methyl-D-erythritol 4-phosphate cytidylyltransferase.